The sequence spans 471 residues: Chitobiosyldiphosphodolichol beta-mannosyltransferase (471 aa).

Over 1–31 (MDTSSVTMHTERACCHQAQRAVAAMLDKAPS) the chain is Lumenal. A helical membrane pass occupies residues 32-52 (WLIWTAVLYVGLPFMLYWAVP). Topologically, residues 53–126 (YLFYHNKTKS…ALPGASNAGK (74 aa)) are cytoplasmic. The segment at residues 127-147 (SLGQTARKVVLQTCHIVRQLW) is an intramembrane region (helical). The Cytoplasmic portion of the chain corresponds to 148-471 (ELRGCDYILI…MSELQVVRQS (324 aa)).

Belongs to the glycosyltransferase group 1 family.

Its subcellular location is the endoplasmic reticulum membrane. The enzyme catalyses an N,N'-diacetylchitobiosyl-diphospho-di-trans,poly-cis-dolichol + GDP-alpha-D-mannose = a beta-D-Man-(1-&gt;4)-beta-D-GlcNAc-(1-&gt;4)-alpha-D-GlcNAc-diphospho-di-trans,poly-cis-dolichol + GDP + H(+). It participates in protein modification; protein glycosylation. In terms of biological role, participates in the formation of the lipid-linked precursor oligosaccharide for N-glycosylation. Involved in assembling the dolichol-pyrophosphate-GlcNAc(2)-Man(5) intermediate on the cytoplasmic surface of the ER. In Eremothecium gossypii (strain ATCC 10895 / CBS 109.51 / FGSC 9923 / NRRL Y-1056) (Yeast), this protein is Chitobiosyldiphosphodolichol beta-mannosyltransferase (ALG1).